The following is a 512-amino-acid chain: ATP synthase subunit alpha (512 aa).

169 to 176 (GDRQTGKT) is a binding site for ATP.

It belongs to the ATPase alpha/beta chains family. F-type ATPases have 2 components, CF(1) - the catalytic core - and CF(0) - the membrane proton channel. CF(1) has five subunits: alpha(3), beta(3), gamma(1), delta(1), epsilon(1). CF(0) has three main subunits: a(1), b(2) and c(9-12). The alpha and beta chains form an alternating ring which encloses part of the gamma chain. CF(1) is attached to CF(0) by a central stalk formed by the gamma and epsilon chains, while a peripheral stalk is formed by the delta and b chains.

The protein localises to the cell membrane. It carries out the reaction ATP + H2O + 4 H(+)(in) = ADP + phosphate + 5 H(+)(out). In terms of biological role, produces ATP from ADP in the presence of a proton gradient across the membrane. The alpha chain is a regulatory subunit. This Buchnera aphidicola subsp. Acyrthosiphon pisum (strain 5A) protein is ATP synthase subunit alpha.